Here is a 176-residue protein sequence, read N- to C-terminus: Glutathione-regulated potassium-efflux system ancillary protein KefF (176 aa).

FMN-binding positions include histidine 8, serine 14–asparagine 17, methionine 65–tyrosine 68, and threonine 105–glycine 108.

It belongs to the NAD(P)H dehydrogenase (quinone) family. KefF subfamily. In terms of assembly, homodimer. Interacts with KefC. Requires FMN as cofactor.

The protein resides in the cell inner membrane. It catalyses the reaction a quinone + NADH + H(+) = a quinol + NAD(+). It carries out the reaction a quinone + NADPH + H(+) = a quinol + NADP(+). Regulatory subunit of a potassium efflux system that confers protection against electrophiles. Required for full activity of KefC. Shows redox enzymatic activity, but this enzymatic activity is not required for activation of KefC. The protein is Glutathione-regulated potassium-efflux system ancillary protein KefF of Salmonella dublin (strain CT_02021853).